Reading from the N-terminus, the 643-residue chain is Nicastrin (643 aa).

A signal peptide spans Met-1 to Ser-20. Over Glu-21–Glu-611 the chain is Extracellular. Cys-42 and Cys-54 are disulfide-bonded. 2 N-linked (GlcNAc...) asparagine glycosylation sites follow: Asn-96 and Asn-166. Cystine bridges form between Cys-204–Cys-210 and Cys-308–Cys-318. Asn-333 and Asn-385 each carry an N-linked (GlcNAc...) asparagine glycan. Disulfide bonds link Cys-479-Cys-486, Cys-540-Cys-551, and Cys-546-Cys-556. N-linked (GlcNAc...) asparagine glycosylation is present at Asn-584. A helical membrane pass occupies residues Ile-612–Val-632. Topologically, residues Lys-633–Leu-643 are cytoplasmic.

The protein belongs to the nicastrin family. As to quaternary structure, component of the gamma-secretase complex, a complex composed of a presenilin homodimer, nicastrin, aph1 and pen2.

It is found in the membrane. Essential subunit of the gamma-secretase complex, an endoprotease complex that catalyzes the intramembrane cleavage of integral membrane proteins such as Notch receptors and APP (amyloid-beta precursor protein). This chain is Nicastrin, found in Dictyostelium purpureum (Slime mold).